Here is a 317-residue protein sequence, read N- to C-terminus: tRNA dimethylallyltransferase (317 aa).

21–28 lines the ATP pocket; it reads GPTASGKS. 23–28 serves as a coordination point for substrate; the sequence is TASGKS. The interval 46–49 is interaction with substrate tRNA; it reads DSMQ.

This sequence belongs to the IPP transferase family. Monomer. It depends on Mg(2+) as a cofactor.

The catalysed reaction is adenosine(37) in tRNA + dimethylallyl diphosphate = N(6)-dimethylallyladenosine(37) in tRNA + diphosphate. Its function is as follows. Catalyzes the transfer of a dimethylallyl group onto the adenine at position 37 in tRNAs that read codons beginning with uridine, leading to the formation of N6-(dimethylallyl)adenosine (i(6)A). The sequence is that of tRNA dimethylallyltransferase from Nitrobacter hamburgensis (strain DSM 10229 / NCIMB 13809 / X14).